An 89-amino-acid polypeptide reads, in one-letter code: Small ribosomal subunit protein uS15 (89 aa).

Belongs to the universal ribosomal protein uS15 family. In terms of assembly, part of the 30S ribosomal subunit. Forms a bridge to the 50S subunit in the 70S ribosome, contacting the 23S rRNA.

In terms of biological role, one of the primary rRNA binding proteins, it binds directly to 16S rRNA where it helps nucleate assembly of the platform of the 30S subunit by binding and bridging several RNA helices of the 16S rRNA. Its function is as follows. Forms an intersubunit bridge (bridge B4) with the 23S rRNA of the 50S subunit in the ribosome. This chain is Small ribosomal subunit protein uS15, found in Photorhabdus luminescens (Xenorhabdus luminescens).